The chain runs to 397 residues: GTPase Obg (397 aa).

The region spanning 1 to 159 is the Obg domain; that stretch reads MKFVDEATII…RNLRLELKVL (159 aa). The interval 128 to 148 is disordered; sequence TRFKSSVNRAPRQTSKGSEGE. Over residues 129-144 the composition is skewed to polar residues; the sequence is RFKSSVNRAPRQTSKG. The OBG-type G domain maps to 160-333; it reads ADVGLLGLPN…LVQAVMRWIE (174 aa). Residues 166–173, 191–195, 213–216, 283–286, and 314–316 contribute to the GTP site; these read GLPNAGKS, FTTLV, DIPG, NKVD, and SAL. Ser173 and Thr193 together coordinate Mg(2+). Residues 336 to 347 are compositionally biased toward acidic residues; sequence AEQEADNPDFAE. Residues 336–397 form a disordered region; the sequence is AEQEADNPDF…YDVEVVYAPE (62 aa). Residues 349–370 show a composition bias toward basic and acidic residues; that stretch reads EAARRRRMDEEARQKIEADRQA. Acidic residues predominate over residues 378–390; it reads DDDDDFDDDDYDV.

This sequence belongs to the TRAFAC class OBG-HflX-like GTPase superfamily. OBG GTPase family. As to quaternary structure, monomer. Mg(2+) serves as cofactor.

The protein resides in the cytoplasm. Functionally, an essential GTPase which binds GTP, GDP and possibly (p)ppGpp with moderate affinity, with high nucleotide exchange rates and a fairly low GTP hydrolysis rate. Plays a role in control of the cell cycle, stress response, ribosome biogenesis and in those bacteria that undergo differentiation, in morphogenesis control. The sequence is that of GTPase Obg from Marinobacter nauticus (strain ATCC 700491 / DSM 11845 / VT8) (Marinobacter aquaeolei).